The chain runs to 520 residues: GMP synthase [glutamine-hydrolyzing] (520 aa).

The region spanning 9-202 (TVLIVDFGSQ…IHNIAGIKGD (194 aa)) is the Glutamine amidotransferase type-1 domain. Cys86 acts as the Nucleophile in catalysis. Residues His176 and Glu178 contribute to the active site. The 193-residue stretch at 203–395 (WSMSAYRAKA…LGLPDSFIGR (193 aa)) folds into the GMPS ATP-PPase domain. Residue 230 to 236 (SGGVDSS) coordinates ATP.

As to quaternary structure, homodimer.

It catalyses the reaction XMP + L-glutamine + ATP + H2O = GMP + L-glutamate + AMP + diphosphate + 2 H(+). The protein operates within purine metabolism; GMP biosynthesis; GMP from XMP (L-Gln route): step 1/1. Catalyzes the synthesis of GMP from XMP. This Rhizobium rhizogenes (strain K84 / ATCC BAA-868) (Agrobacterium radiobacter) protein is GMP synthase [glutamine-hydrolyzing].